The sequence spans 320 residues: Protease HtpX homolog (320 aa).

A run of 2 helical transmembrane segments spans residues 6–26 (TAML…LIGG) and 28–48 (AGMM…YWNS). His130 lines the Zn(2+) pocket. Glu131 is an active-site residue. His134 provides a ligand contact to Zn(2+). Helical transmembrane passes span 145 to 165 (ITAT…FFGG) and 173 to 193 (PLGF…AMLV). Glu202 is a binding site for Zn(2+). The interval 283–320 (MNVSTSPARAANPSRKSRSVPDTGLGRGGSQPPKGPWS) is disordered.

Belongs to the peptidase M48B family. Requires Zn(2+) as cofactor.

The protein resides in the cell inner membrane. The polypeptide is Protease HtpX homolog (Rhizobium johnstonii (strain DSM 114642 / LMG 32736 / 3841) (Rhizobium leguminosarum bv. viciae)).